A 517-amino-acid polypeptide reads, in one-letter code: MLHMILSQRVILLRKYHSSANALVTKSPNSIPELVKHIDSDLIRNAHKVFDEIPELDVISATAVIGRFVKESRHVEASQAFKRLLCLGIRPNEFTFGTVIGSSTTSRDVKLGKQLHCYALKMGLASNVFVGSAVLNCYVKLSTLTDARRCFDDTRDPNVVSITNLISGYLKKHEFEEALSLFRAMPERSVVTWNAVIGGFSQTGRNEEAVNTFVDMLREGVVIPNESTFPCAITAISNIASHGAGKSIHACAIKFLGKRFNVFVWNSLISFYSKCGNMEDSLLAFNKLEEEQRNIVSWNSMIWGYAHNGRGEEAVAMFEKMVKDTNLRPNNVTILGVLFACNHAGLIQEGYMYFNKAVNDYDDPNLLELEHYACMVDMLSRSGRFKEAEELIKSMPLDPGIGFWKALLGGCQIHSNKRLAKLAASKILELDPRDVSSYVMLSNAYSAMENWQNVSLIRRKMKETGLKRFTGCSWIEVRDQIRVFVNADKNNELKDEVYRMLALVSQHLEENECWKDL.

The N-terminal 23 residues, 1-23 (MLHMILSQRVILLRKYHSSANAL), are a transit peptide targeting the mitochondrion. PPR repeat units lie at residues 57–91 (DVIS…GIRP), 92–126 (NEFT…GLAS), 127–157 (NVFV…TRDP), 158–188 (NVVS…MPER), 189–223 (SVVT…GVVI), 225–259 (NEST…LGKR), 261–291 (NVFV…LEEE), 294–329 (NIVS…NLRP), and 368–398 (ELEH…MPLD). The segment at 403–478 (FWKALLGGCQ…FTGCSWIEVR (76 aa)) is type E motif. A type E(+) motif region spans residues 479 to 509 (DQIRVFVNADKNNELKDEVYRMLALVSQHLE).

It belongs to the PPR family. PCMP-E subfamily.

The protein localises to the mitochondrion. This is Pentatricopeptide repeat-containing protein At5g42450, mitochondrial (PCMP-E102) from Arabidopsis thaliana (Mouse-ear cress).